A 398-amino-acid chain; its full sequence is Endoglucanase (398 aa).

An N-terminal signal peptide occupies residues 1-23; that stretch reads MSPLKCMALAALGAVMFVGSAQA. Glutamate 58 functions as the Proton donor in the catalytic mechanism. Aspartate 119 acts as the Nucleophile in catalysis.

The protein belongs to the glycosyl hydrolase 8 (cellulase D) family.

The protein localises to the secreted. The catalysed reaction is Endohydrolysis of (1-&gt;4)-beta-D-glucosidic linkages in cellulose, lichenin and cereal beta-D-glucans.. It participates in glycan metabolism; bacterial cellulose biosynthesis. Hydrolyzes carboxymethylcellulose. This Pseudomonas fluorescens (strain SBW25) protein is Endoglucanase (bcsZ).